Consider the following 138-residue polypeptide: Ribulose bisphosphate carboxylase small subunit (138 aa).

It belongs to the RuBisCO small chain family. In terms of assembly, heterohexadecamer of 8 large and 8 small subunits.

Its subcellular location is the plastid. The protein resides in the chloroplast. Its function is as follows. RuBisCO catalyzes two reactions: the carboxylation of D-ribulose 1,5-bisphosphate, the primary event in carbon dioxide fixation, as well as the oxidative fragmentation of the pentose substrate in the photorespiration process. Both reactions occur simultaneously and in competition at the same active site. Although the small subunit is not catalytic it is essential for maximal activity. The sequence is that of Ribulose bisphosphate carboxylase small subunit from Antithamnion sp. (Red alga).